The chain runs to 759 residues: ARF GTPase-activating protein GIT2 (759 aa).

In terms of domain architecture, Arf-GAP spans 1–124; sequence MSKRLRSSEV…AFVHRLPCRD (124 aa). Residues 11 to 34 form a C4-type zinc finger; that stretch reads CADCSGPDPSWASVNRGTFLCDEC. ANK repeat units lie at residues 132–161, 166–195, and 199–228; these read DLSK…QANF, KGNT…DPGT, and SGKT…ELTD. The segment at 379 to 422 is disordered; that stretch reads QHSVESQDNDQPDYDSVASDEDTDLETTASKTNRQKSLDSDLSD. Residues 385 to 403 are compositionally biased toward acidic residues; the sequence is QDNDQPDYDSVASDEDTDL. Residues serine 394 and serine 397 each carry the phosphoserine modification. Threonine 401 is modified (phosphothreonine). Serine 415, serine 418, and serine 421 each carry phosphoserine. The stretch at 437–478 forms a coiled coil; that stretch reads LVASEAKIQQLMKVNNNLSDELRIMQKKLQTLQSENSNLRKQ. Residues 480 to 499 are compositionally biased toward polar residues; it reads TTNVYQVQTGSEYTDTSNHS. 2 disordered regions span residues 480-538 and 554-643; these read TTNV…EESR and VTSS…TEDV. Tyrosine 484 carries the post-translational modification Phosphotyrosine. Over residues 555–569 the composition is skewed to low complexity; it reads TSSSSLPSFPSTLSW. Phosphoserine occurs at positions 559, 562, and 570. Basic and acidic residues predominate over residues 570–583; it reads SRDESARRASRLEK. Polar residues predominate over residues 584 to 597; that stretch reads QNSTPESDYDNTPN. Threonine 587 is subject to Phosphothreonine. Position 614 is a phosphoserine (serine 614).

May form heterooligomers with GIT1. Directly interacts with protein Piccolo/PCLO. Interacts with PPFIA1 and PPFIA2. Interacts with ARHGEF7. Identified in a complex with ARHGEF6 and BIN2. Interacts with PAK3. Interacts with PXN/paxillin. Interacts with TGFB1I1. Forms a complex with EFNB1 and GRB4/NCK2.

Functionally, GTPase-activating protein for ADP ribosylation factor family members, including ARF1. The chain is ARF GTPase-activating protein GIT2 (GIT2) from Homo sapiens (Human).